The primary structure comprises 236 residues: MAPSFADVIAVVPAAGIGSRMQTECPKQYLTIGNQTILEHAVAPLLQHPRISRVIIAISPADTAFARLPLAAHPDIQVVRGGAQRADSVLAGLQAAGDARWALVHDAARPCLSAQDLERLLALTETSQVGGILAAPACDTMKRAEPGKPAIAHTVDRENLWHALTPQLFPLELLRDCLTRALAEGATITDEASALEHCGFHPELVAGRADNIKVTRPEDLALAAFYLTRLTPMETA.

It belongs to the IspD/TarI cytidylyltransferase family. IspD subfamily. In terms of assembly, homodimer.

It catalyses the reaction 2-C-methyl-D-erythritol 4-phosphate + CTP + H(+) = 4-CDP-2-C-methyl-D-erythritol + diphosphate. It functions in the pathway isoprenoid biosynthesis; isopentenyl diphosphate biosynthesis via DXP pathway; isopentenyl diphosphate from 1-deoxy-D-xylulose 5-phosphate: step 2/6. In terms of biological role, catalyzes the formation of 4-diphosphocytidyl-2-C-methyl-D-erythritol from CTP and 2-C-methyl-D-erythritol 4-phosphate (MEP). This chain is 2-C-methyl-D-erythritol 4-phosphate cytidylyltransferase, found in Cronobacter sakazakii (strain ATCC BAA-894) (Enterobacter sakazakii).